The chain runs to 155 residues: UPF0178 protein TDE_2151 (155 aa).

The protein belongs to the UPF0178 family.

The sequence is that of UPF0178 protein TDE_2151 from Treponema denticola (strain ATCC 35405 / DSM 14222 / CIP 103919 / JCM 8153 / KCTC 15104).